The sequence spans 239 residues: ATP-dependent dethiobiotin synthetase BioD (239 aa).

Residue 13–18 (EIGKTV) coordinates ATP. T17 is a binding site for Mg(2+). The active site involves K38. T42 is a substrate binding site. Residues K59 and E111 each contribute to the Mg(2+) site. Residues 111 to 114 (EGAG), 175 to 176 (NQ), and 204 to 206 (PSL) contribute to the ATP site.

This sequence belongs to the dethiobiotin synthetase family. In terms of assembly, homodimer. The cofactor is Mg(2+).

Its subcellular location is the cytoplasm. It catalyses the reaction (7R,8S)-7,8-diammoniononanoate + CO2 + ATP = (4R,5S)-dethiobiotin + ADP + phosphate + 3 H(+). It functions in the pathway cofactor biosynthesis; biotin biosynthesis; biotin from 7,8-diaminononanoate: step 1/2. Catalyzes a mechanistically unusual reaction, the ATP-dependent insertion of CO2 between the N7 and N8 nitrogen atoms of 7,8-diaminopelargonic acid (DAPA, also called 7,8-diammoniononanoate) to form a ureido ring. The sequence is that of ATP-dependent dethiobiotin synthetase BioD from Geobacillus sp. (strain WCH70).